Here is a 277-residue protein sequence, read N- to C-terminus: 3-methyl-2-oxobutanoate hydroxymethyltransferase (277 aa).

2 residues coordinate Mg(2+): aspartate 49 and aspartate 88. Residues 49-50, aspartate 88, and lysine 118 contribute to the 3-methyl-2-oxobutanoate site; that span reads DS. Glutamate 120 provides a ligand contact to Mg(2+). Glutamate 186 functions as the Proton acceptor in the catalytic mechanism.

Belongs to the PanB family. In terms of assembly, homodecamer; pentamer of dimers. Mg(2+) serves as cofactor.

Its subcellular location is the cytoplasm. The catalysed reaction is 3-methyl-2-oxobutanoate + (6R)-5,10-methylene-5,6,7,8-tetrahydrofolate + H2O = 2-dehydropantoate + (6S)-5,6,7,8-tetrahydrofolate. It participates in cofactor biosynthesis; (R)-pantothenate biosynthesis; (R)-pantoate from 3-methyl-2-oxobutanoate: step 1/2. Functionally, catalyzes the reversible reaction in which hydroxymethyl group from 5,10-methylenetetrahydrofolate is transferred onto alpha-ketoisovalerate to form ketopantoate. This chain is 3-methyl-2-oxobutanoate hydroxymethyltransferase, found in Cereibacter sphaeroides (strain ATCC 17029 / ATH 2.4.9) (Rhodobacter sphaeroides).